Here is a 105-residue protein sequence, read N- to C-terminus: uncharacterized protein (105 aa).

This sequence belongs to the M.jannaschii MJ0023/MJ0349/MJ1072/MJ1074/MJ1107/MJECL16 family.

This is an uncharacterized protein from Methanocaldococcus jannaschii (strain ATCC 43067 / DSM 2661 / JAL-1 / JCM 10045 / NBRC 100440) (Methanococcus jannaschii).